The chain runs to 31 residues: MAIDNTQIFIALLTALIPAFFALKLGKELSK.

The helical transmembrane segment at 7–26 threads the bilayer; the sequence is QIFIALLTALIPAFFALKLG.

This sequence belongs to the PsaM family.

It is found in the plastid. The protein localises to the chloroplast thylakoid membrane. The sequence is that of Photosystem I reaction center subunit XII from Euglena granulata.